We begin with the raw amino-acid sequence, 239 residues long: Outer membrane protein PagN (239 aa).

A signal peptide spans 1-22 (MKNFFAVCIIPLVVAWSATASA). Topologically, residues 23 to 26 (KEGI) are periplasmic. Residues 27-36 (YITGKAGTSV) form a beta stranded membrane-spanning segment. Topologically, residues 37 to 65 (VNVYGINSTFSQDEIVNGHATLPDRTKGV) are extracellular. A beta stranded membrane pass occupies residues 66–76 (FGGGVAIGYDF). The Periplasmic segment spans residues 77-81 (YDPFQ). A beta stranded transmembrane segment spans residues 82–92 (LPVRLELDTTF). At 93 to 120 (RGETDAKGGQDIIAFGDPVHINVKNQVR) the chain is on the extracellular side. The beta stranded transmembrane segment at 121-132 (MTTYMVNGYYDF) threads the bilayer. The Periplasmic segment spans residues 133–137 (HNSTA). Residues 138–148 (FTPYISAGVGL) form a beta stranded membrane-spanning segment. At 149 to 174 (AHVKLSNNTIPVGFGINETLSASKNN) the chain is on the extracellular side. Residues 175–185 (FAWGAGIGAKY) form a beta stranded membrane-spanning segment. Residues 186–190 (AVTDN) lie on the Periplasmic side of the membrane. The chain crosses the membrane as a beta stranded span at residues 191–200 (IMIDASYKYI). Residues 201–230 (NAGKVSISKNHYAGDEHTAYDADTKAASND) are Extracellular-facing. A beta stranded membrane pass occupies residues 231-239 (FMLGITYAF).

Its subcellular location is the cell outer membrane. Functionally, haemagglutinin that facilitates the adhesion to and invasion of epithelial mammalian cells. Utilizes heparinated proteoglycan as a receptor to successfully invade host cells. The polypeptide is Outer membrane protein PagN (pagN) (Salmonella typhimurium (strain LT2 / SGSC1412 / ATCC 700720)).